We begin with the raw amino-acid sequence, 493 residues long: Zinc finger CCCH domain-containing protein 34 (493 aa).

3 C3H1-type zinc fingers span residues arginine 14 to glycine 43, arginine 45 to leucine 71, and valine 91 to leucine 118. The segment at methionine 397–lysine 477 is disordered. The segment covering phenylalanine 409–glutamine 420 has biased composition (basic residues). Polar residues predominate over residues serine 452 to serine 468.

This Oryza sativa subsp. japonica (Rice) protein is Zinc finger CCCH domain-containing protein 34.